The chain runs to 337 residues: Methionine import ATP-binding protein MetN (337 aa).

The region spanning 4–240 (IKNLEITYPG…PWHPITKEFV (237 aa)) is the ABC transporter domain. Residue 37–44 (GLSGAGKS) participates in ATP binding.

Belongs to the ABC transporter superfamily. Methionine importer (TC 3.A.1.24) family. In terms of assembly, the complex is composed of two ATP-binding proteins (MetN), two transmembrane proteins (MetI) and a solute-binding protein (MetQ).

It is found in the cell membrane. The catalysed reaction is L-methionine(out) + ATP + H2O = L-methionine(in) + ADP + phosphate + H(+). The enzyme catalyses D-methionine(out) + ATP + H2O = D-methionine(in) + ADP + phosphate + H(+). Functionally, part of the ABC transporter complex MetNIQ involved in methionine import. Responsible for energy coupling to the transport system. The protein is Methionine import ATP-binding protein MetN of Carboxydothermus hydrogenoformans (strain ATCC BAA-161 / DSM 6008 / Z-2901).